A 444-amino-acid polypeptide reads, in one-letter code: MFS-type transporter dbaD (444 aa).

A compositionally biased stretch (polar residues) spans 1–13; sequence MTEQPPQNHSVDL. The interval 1 to 57 is disordered; that stretch reads MTEQPPQNHSVDLNQNEDNNENDYRSSSATDAERPCEPKIEESTAKPPTGPPAPPPP. N-linked (GlcNAc...) asparagine glycosylation is present at Asn-8. The segment covering 31–44 has biased composition (basic and acidic residues); it reads DAERPCEPKIEEST. Positions 48-57 are enriched in pro residues; sequence PTGPPAPPPP. 11 helical membrane passes run 62–82, 107–127, 134–154, 159–179, 192–212, 223–243, 267–287, 301–323, 330–350, 356–376, and 394–414; these read LVAW…WGIM, WIGS…GSIY, ALLV…SLCK, VLLA…VPCV, TALG…PIVL, WSVR…IAVM, MAFT…LFYI, MAFY…PNAM, FNLI…LLAV, LIVI…LPPL, and MGFG…GAIL. N-linked (GlcNAc...) asparagine glycosylation is present at Asn-421. The chain crosses the membrane as a helical span at residues 424–444; it reads GLWVYGGVTSLVAGFIICIAV.

This sequence belongs to the major facilitator superfamily. Monocarboxylate porter (TC 2.A.1.13) family.

It localises to the cell membrane. MFS-type transporter; part of the gene cluster that mediates the biosynthesis of the antibiotic 2,4- dihydroxy-3-methyl-6-(2-oxopropyl)benzaldehyde (DHMBA) and its derivatives. Is probably involved in the transport of the metabolites to the environment. The protein is MFS-type transporter dbaD of Emericella nidulans (strain FGSC A4 / ATCC 38163 / CBS 112.46 / NRRL 194 / M139) (Aspergillus nidulans).